Reading from the N-terminus, the 617-residue chain is tRNA-dihydrouridine(47) synthase [NAD(P)(+)] (617 aa).

The C3H1-type zinc finger occupies lysine 42–glutamate 70. Residues glutamate 160–serine 193 form a disordered region. FMN is bound by residues proline 245–threonine 247 and glutamine 308. The active-site Proton donor is the cysteine 340. FMN is bound by residues lysine 380, histidine 411, asparagine 460–aspartate 462, and alanine 483–arginine 484.

The protein belongs to the Dus family. Dus3 subfamily. FMN serves as cofactor.

It is found in the cytoplasm. Its subcellular location is the nucleus. It catalyses the reaction 5,6-dihydrouridine(47) in tRNA + NAD(+) = uridine(47) in tRNA + NADH + H(+). The catalysed reaction is 5,6-dihydrouridine(47) in tRNA + NADP(+) = uridine(47) in tRNA + NADPH + H(+). It carries out the reaction a 5,6-dihydrouridine in mRNA + NAD(+) = a uridine in mRNA + NADH + H(+). The enzyme catalyses a 5,6-dihydrouridine in mRNA + NADP(+) = a uridine in mRNA + NADPH + H(+). Functionally, catalyzes the synthesis of dihydrouridine, a modified base, in various RNAs, such as tRNAs and mRNAs. Modifies the uridine in position 47 (U47) in the D-loop of tRNAs. Also able to mediate formation of dihydrouridine outside of the D-loop of tRNAs. Catalyzes the synthesis of dihydrouridine in some mRNAs, thereby affecting their translation. Dus3-mediated dihydrouridylation of the mRNA encoding alpha-tubulin nda2 is required for meiotic chromosome segregation. This Schizosaccharomyces pombe (strain 972 / ATCC 24843) (Fission yeast) protein is tRNA-dihydrouridine(47) synthase [NAD(P)(+)].